The sequence spans 402 residues: Arginine biosynthesis bifunctional protein ArgJ (402 aa).

Residues T152, K178, T189, E275, N397, and T402 each coordinate substrate. Residue T189 is the Nucleophile of the active site.

Belongs to the ArgJ family. In terms of assembly, heterotetramer of two alpha and two beta chains.

The protein resides in the cytoplasm. It carries out the reaction N(2)-acetyl-L-ornithine + L-glutamate = N-acetyl-L-glutamate + L-ornithine. The catalysed reaction is L-glutamate + acetyl-CoA = N-acetyl-L-glutamate + CoA + H(+). The protein operates within amino-acid biosynthesis; L-arginine biosynthesis; L-ornithine and N-acetyl-L-glutamate from L-glutamate and N(2)-acetyl-L-ornithine (cyclic): step 1/1. It participates in amino-acid biosynthesis; L-arginine biosynthesis; N(2)-acetyl-L-ornithine from L-glutamate: step 1/4. Its function is as follows. Catalyzes two activities which are involved in the cyclic version of arginine biosynthesis: the synthesis of N-acetylglutamate from glutamate and acetyl-CoA as the acetyl donor, and of ornithine by transacetylation between N(2)-acetylornithine and glutamate. The sequence is that of Arginine biosynthesis bifunctional protein ArgJ from Lactiplantibacillus plantarum (strain ATCC BAA-793 / NCIMB 8826 / WCFS1) (Lactobacillus plantarum).